Reading from the N-terminus, the 529-residue chain is NAD(P)H-quinone oxidoreductase chain 4 1 (529 aa).

13 consecutive transmembrane segments (helical) span residues 4–24 (FPWL…IPFI), 36–56 (WYAL…FTNF), 91–111 (LILL…PVTL), 115–135 (LFYF…AVQD), 137–157 (LVFF…LAIW), 169–189 (FILY…AMAF), 209–229 (GFQL…LPIV), 243–263 (TAPV…YALI), 277–297 (FAPV…LTSY), 314–334 (IGFV…GAVL), 335–355 (QMVS…ATYD), 387–407 (LALP…GFAT), and 417–437 (VIVV…LLSM).

It belongs to the complex I subunit 4 family.

The protein localises to the cellular thylakoid membrane. It catalyses the reaction a plastoquinone + NADH + (n+1) H(+)(in) = a plastoquinol + NAD(+) + n H(+)(out). It carries out the reaction a plastoquinone + NADPH + (n+1) H(+)(in) = a plastoquinol + NADP(+) + n H(+)(out). NDH-1 shuttles electrons from NAD(P)H, via FMN and iron-sulfur (Fe-S) centers, to quinones in the respiratory chain. The immediate electron acceptor for the enzyme in this species is believed to be plastoquinone. Couples the redox reaction to proton translocation (for every two electrons transferred, four hydrogen ions are translocated across the cytoplasmic membrane), and thus conserves the redox energy in a proton gradient. The polypeptide is NAD(P)H-quinone oxidoreductase chain 4 1 (Thermosynechococcus vestitus (strain NIES-2133 / IAM M-273 / BP-1)).